Here is a 196-residue protein sequence, read N- to C-terminus: Putative NADH dehydrogenase/NAD(P)H nitroreductase Rpal_4764 (196 aa).

Belongs to the nitroreductase family. HadB/RutE subfamily. It depends on FMN as a cofactor.

The chain is Putative NADH dehydrogenase/NAD(P)H nitroreductase Rpal_4764 from Rhodopseudomonas palustris (strain TIE-1).